We begin with the raw amino-acid sequence, 81 residues long: ATP synthase subunit C, cyanelle (81 aa).

A run of 2 helical transmembrane segments spans residues 7-27 (AASV…PGIG) and 57-77 (LAFM…LLFA).

It belongs to the ATPase C chain family. F-type ATPases have 2 components, F(1) - the catalytic core - and F(0) - the membrane proton channel. F(1) has five subunits: alpha(3), beta(3), gamma(1), delta(1), epsilon(1). F(0) has four main subunits: a(1), b(1), b'(1) and c(10-14). The alpha and beta chains form an alternating ring which encloses part of the gamma chain. F(1) is attached to F(0) by a central stalk formed by the gamma and epsilon chains, while a peripheral stalk is formed by the delta, b and b' chains.

The protein resides in the plastid. It localises to the cyanelle thylakoid membrane. In terms of biological role, f(1)F(0) ATP synthase produces ATP from ADP in the presence of a proton or sodium gradient. F-type ATPases consist of two structural domains, F(1) containing the extramembraneous catalytic core and F(0) containing the membrane proton channel, linked together by a central stalk and a peripheral stalk. During catalysis, ATP synthesis in the catalytic domain of F(1) is coupled via a rotary mechanism of the central stalk subunits to proton translocation. Key component of the F(0) channel; it plays a direct role in translocation across the membrane. A homomeric c-ring of between 10-14 subunits forms the central stalk rotor element with the F(1) delta and epsilon subunits. The polypeptide is ATP synthase subunit C, cyanelle (Cyanophora paradoxa).